A 23-amino-acid chain; its full sequence is Defensin-like protein 2 (23 aa).

Gln-1 is modified (pyrrolidone carboxylic acid).

Belongs to the DEFL family. In terms of assembly, forms oligomers in its native state.

Its function is as follows. Possesses antifungal activity sensitive to inorganic cations. The protein is Defensin-like protein 2 of Brassica napus (Rape).